A 69-amino-acid chain; its full sequence is Cytochrome c oxidase subunit 8A, mitochondrial (69 aa).

The transit peptide at Met1 to Gln25 directs the protein to the mitochondrion. Positions Tyr2 to Leu19 match the SIFI-degron motif. Residues Val26–Gly36 lie on the Mitochondrial matrix side of the membrane. Residues Val37 to Ser60 form a helical membrane-spanning segment. Residues His61–Gly69 lie on the Mitochondrial intermembrane side of the membrane.

This sequence belongs to the cytochrome c oxidase VIII family. In terms of assembly, component of the cytochrome c oxidase (complex IV, CIV), a multisubunit enzyme composed of 14 subunits. The complex is composed of a catalytic core of 3 subunits MT-CO1, MT-CO2 and MT-CO3, encoded in the mitochondrial DNA, and 11 supernumerary subunits COX4I, COX5A, COX5B, COX6A, COX6B, COX6C, COX7A, COX7B, COX7C, COX8 and NDUFA4, which are encoded in the nuclear genome. The complex exists as a monomer or a dimer and forms supercomplexes (SCs) in the inner mitochondrial membrane with NADH-ubiquinone oxidoreductase (complex I, CI) and ubiquinol-cytochrome c oxidoreductase (cytochrome b-c1 complex, complex III, CIII), resulting in different assemblies (supercomplex SCI(1)III(2)IV(1) and megacomplex MCI(2)III(2)IV(2)). Post-translationally, in response to mitochondrial stress, the precursor protein is ubiquitinated by the SIFI complex in the cytoplasm before mitochondrial import, leading to its degradation. Within the SIFI complex, UBR4 initiates ubiquitin chain that are further elongated or branched by KCMF1.

It is found in the mitochondrion inner membrane. It functions in the pathway energy metabolism; oxidative phosphorylation. Functionally, component of the cytochrome c oxidase, the last enzyme in the mitochondrial electron transport chain which drives oxidative phosphorylation. The respiratory chain contains 3 multisubunit complexes succinate dehydrogenase (complex II, CII), ubiquinol-cytochrome c oxidoreductase (cytochrome b-c1 complex, complex III, CIII) and cytochrome c oxidase (complex IV, CIV), that cooperate to transfer electrons derived from NADH and succinate to molecular oxygen, creating an electrochemical gradient over the inner membrane that drives transmembrane transport and the ATP synthase. Cytochrome c oxidase is the component of the respiratory chain that catalyzes the reduction of oxygen to water. Electrons originating from reduced cytochrome c in the intermembrane space (IMS) are transferred via the dinuclear copper A center (CU(A)) of subunit 2 and heme A of subunit 1 to the active site in subunit 1, a binuclear center (BNC) formed by heme A3 and copper B (CU(B)). The BNC reduces molecular oxygen to 2 water molecules using 4 electrons from cytochrome c in the IMS and 4 protons from the mitochondrial matrix. The chain is Cytochrome c oxidase subunit 8A, mitochondrial (COX8A) from Ateles belzebuth (White-bellied spider monkey).